Reading from the N-terminus, the 89-residue chain is Small ribosomal subunit protein bS20 (89 aa).

Residues 1 to 26 (MANSPQAKKRARQNEKNRKHNASLRS) form a disordered region. Residues 7 to 22 (AKKRARQNEKNRKHNA) are compositionally biased toward basic residues.

This sequence belongs to the bacterial ribosomal protein bS20 family.

In terms of biological role, binds directly to 16S ribosomal RNA. The chain is Small ribosomal subunit protein bS20 from Marinobacter nauticus (strain ATCC 700491 / DSM 11845 / VT8) (Marinobacter aquaeolei).